A 120-amino-acid chain; its full sequence is NAD(P)H-quinone oxidoreductase subunit 3, chloroplastic (120 aa).

Transmembrane regions (helical) follow at residues 10–30 (FLVF…ASKL), 64–84 (MFAL…PWAV), and 89–109 (MGFI…VGLV).

It belongs to the complex I subunit 3 family. In terms of assembly, NDH is composed of at least 16 different subunits, 5 of which are encoded in the nucleus.

It is found in the plastid. The protein localises to the chloroplast thylakoid membrane. It carries out the reaction a plastoquinone + NADH + (n+1) H(+)(in) = a plastoquinol + NAD(+) + n H(+)(out). The catalysed reaction is a plastoquinone + NADPH + (n+1) H(+)(in) = a plastoquinol + NADP(+) + n H(+)(out). In terms of biological role, NDH shuttles electrons from NAD(P)H:plastoquinone, via FMN and iron-sulfur (Fe-S) centers, to quinones in the photosynthetic chain and possibly in a chloroplast respiratory chain. The immediate electron acceptor for the enzyme in this species is believed to be plastoquinone. Couples the redox reaction to proton translocation, and thus conserves the redox energy in a proton gradient. The chain is NAD(P)H-quinone oxidoreductase subunit 3, chloroplastic from Chlorokybus atmophyticus (Soil alga).